The primary structure comprises 29 residues: Brevinin-2Tc (29 aa).

Cys23 and Cys29 form a disulfide bridge.

Belongs to the frog skin active peptide (FSAP) family. Brevinin subfamily. As to expression, expressed by the skin glands.

It localises to the secreted. Antibacterial activity against representative Gram-negative and Gram-positive bacteria. This chain is Brevinin-2Tc, found in Rana temporaria (European common frog).